Consider the following 210-residue polypeptide: Na(+)-translocating NADH-quinone reductase subunit D (210 aa).

6 helical membrane passes run proline 14–valine 34, leucine 42–isoleucine 62, isoleucine 72–alanine 92, valine 103–methionine 123, phenylalanine 131–valine 151, and asparagine 178–isoleucine 198.

The protein belongs to the NqrDE/RnfAE family. As to quaternary structure, composed of six subunits; NqrA, NqrB, NqrC, NqrD, NqrE and NqrF.

Its subcellular location is the cell inner membrane. It carries out the reaction a ubiquinone + n Na(+)(in) + NADH + H(+) = a ubiquinol + n Na(+)(out) + NAD(+). In terms of biological role, NQR complex catalyzes the reduction of ubiquinone-1 to ubiquinol by two successive reactions, coupled with the transport of Na(+) ions from the cytoplasm to the periplasm. NqrA to NqrE are probably involved in the second step, the conversion of ubisemiquinone to ubiquinol. The protein is Na(+)-translocating NADH-quinone reductase subunit D of Shewanella putrefaciens (strain CN-32 / ATCC BAA-453).